We begin with the raw amino-acid sequence, 353 residues long: Peroxisome assembly protein 12-B (353 aa).

Residues 1-19 (MAERGAHITTTSPLDDRPS) lie on the Peroxisomal matrix side of the membrane. The helical transmembrane segment at 20–47 (IFEVVAQESLMAAARPALHHIVKVLAES) threads the bilayer. Over 48 to 51 (NPAR) the chain is Cytoplasmic. The chain crosses the membrane as a helical span at residues 52-76 (YGTLWRWFDELYTLLECLLQQHYLS). The Peroxisomal matrix portion of the chain corresponds to 77-104 (WASASFSENFYGLKRVTLGKQVGQRNLA). Residues 105-134 (RKEYWKSLLLLVLIPYLRIKLEKLVNSLRE) traverse the membrane as a helical segment. At 135–139 (EEDYS) the chain is on the cytoplasmic side. The helical transmembrane segment at 140–178 (IQNPTSFHKRCYKAILASYPFLKLGWEAWFLFYQLRYIL) threads the bilayer. Topologically, residues 179 to 243 (WNGKHHSPLL…LGAVTLSVSS (65 aa)) are peroxisomal matrix. A helical membrane pass occupies residues 244 to 271 (SLSLGVFFLQFLDWWYSAENRETLKSLG). Residues 272–353 (NLPVPPPPIH…HLIKLYTPDG (82 aa)) are Cytoplasmic-facing. Positions 298, 301, 319, and 322 each coordinate Zn(2+). Residues 298–337 (CPLCRKVRVNDTALGTSGYVFCYRCAYYYVKTHQRCPVSG) form an RING-type; degenerate zinc finger.

The protein belongs to the pex2/pex10/pex12 family. Component of the PEX2-PEX10-PEX12 retrotranslocation channel.

The protein localises to the peroxisome membrane. Its pathway is protein modification; protein ubiquitination. Its function is as follows. Component of a retrotranslocation channel required for peroxisome organization by mediating export of the PEX5 receptor from peroxisomes to the cytosol, thereby promoting PEX5 recycling. The retrotranslocation channel is composed of PEX2, PEX10 and PEX12; each subunit contributing transmembrane segments that coassemble into an open channel that specifically allows the passage of PEX5 through the peroxisomal membrane. PEX12 also regulates PEX5 recycling by activating the E3 ubiquitin-protein ligase activity of PEX10. When PEX5 recycling is compromised, PEX12 stimulates PEX10-mediated polyubiquitination of PEX5, leading to its subsequent degradation. This Xenopus laevis (African clawed frog) protein is Peroxisome assembly protein 12-B.